We begin with the raw amino-acid sequence, 49 residues long: Large ribosomal subunit protein bL33B (49 aa).

This sequence belongs to the bacterial ribosomal protein bL33 family.

This chain is Large ribosomal subunit protein bL33B, found in Bacillus cereus (strain ATCC 14579 / DSM 31 / CCUG 7414 / JCM 2152 / NBRC 15305 / NCIMB 9373 / NCTC 2599 / NRRL B-3711).